We begin with the raw amino-acid sequence, 170 residues long: uncharacterized protein (170 aa).

This is an uncharacterized protein from Acidianus bottle-shaped virus (isolate Italy/Pozzuoli) (ABV).